We begin with the raw amino-acid sequence, 625 residues long: MQFNYDVIVVGAGHAGCEAAAAAAKLGSQVLLITPDMNKIAQMSCNPAVGGIAKGQIVREIDALGGRMGIVTDATAIQFRMLNRSKGPAMWSPRAQSDRMRFMEAWRDIVEHEPNLYMWQDSVRCLSIRQGAVAGVVTALGVEFQARTVVLTTGTFLGGVMHFGERMIEGGRIAEPAFHGITEQLRDLGFRTDRMKTGTPARIDGRSIDFSLTTEQSGEEDHHRFSYMDTPRRVLRQRSCYALYTNPECHEILSKGLDRSPLYNGQIQSIGPRYCPSIETKIVTFADKEMHQLFLEPEGETSNEFYLNGFSSSLPLEIQLEALKAIPALRHVHIYRPGYAIEYDFFDPTQLRHTLETKPVKGLFFAGQINGTTGYEEAAGQGLIAGINAHLHCHGAGEFTLGRDEAYIGVLIDDLVSKGVDEPYRMFTSRAEYRILLRQDDADMRLTPKAEAIGLADSRRSELLREKQVFRDKLIDFTHKFSLKPDLINPHLESAGHLPLKQGIKLYDLLLRPQIGMNEVCSMVPSLQRIVEEIPASRREEIVEAAEILIKYDGYIKRERALADKINRLESIRLPQHVDYMQMQSLSTEARQKLTSIRPETIAQASRIPGVSPHDVSILLVLCGR.

Residue 11–16 coordinates FAD; it reads GAGHAG. 271-285 serves as a coordination point for NAD(+); sequence GPRYCPSIETKIVTF.

Belongs to the MnmG family. As to quaternary structure, homodimer. Heterotetramer of two MnmE and two MnmG subunits. The cofactor is FAD.

It localises to the cytoplasm. In terms of biological role, NAD-binding protein involved in the addition of a carboxymethylaminomethyl (cmnm) group at the wobble position (U34) of certain tRNAs, forming tRNA-cmnm(5)s(2)U34. The protein is tRNA uridine 5-carboxymethylaminomethyl modification enzyme MnmG of Porphyromonas gingivalis (strain ATCC BAA-308 / W83).